Consider the following 465-residue polypeptide: Glutamate--tRNA ligase (465 aa).

The 'HIGH' region signature appears at 11–21 (PSPTGFIHLGN). The short motif at 243-247 (KMSKR) is the 'KMSKS' region element. K246 lines the ATP pocket.

It belongs to the class-I aminoacyl-tRNA synthetase family. Glutamate--tRNA ligase type 1 subfamily. Monomer.

The protein localises to the cytoplasm. It catalyses the reaction tRNA(Glu) + L-glutamate + ATP = L-glutamyl-tRNA(Glu) + AMP + diphosphate. Its function is as follows. Catalyzes the attachment of glutamate to tRNA(Glu) in a two-step reaction: glutamate is first activated by ATP to form Glu-AMP and then transferred to the acceptor end of tRNA(Glu). The sequence is that of Glutamate--tRNA ligase from Cupriavidus metallidurans (strain ATCC 43123 / DSM 2839 / NBRC 102507 / CH34) (Ralstonia metallidurans).